The chain runs to 216 residues: Small ribosomal subunit protein uS3 (216 aa).

In terms of domain architecture, KH type-2 spans 24-93 (IKEFLEYRLA…NPQIDVIDVS (70 aa)).

The protein belongs to the universal ribosomal protein uS3 family. As to quaternary structure, part of the 30S ribosomal subunit.

Binds the lower part of the 30S subunit head. The chain is Small ribosomal subunit protein uS3 from Pyrobaculum calidifontis (strain DSM 21063 / JCM 11548 / VA1).